A 1452-amino-acid chain; its full sequence is ABC-type transporter adrC (1452 aa).

The interval 1–38 (MAPEEGDQAMSHEDKAACSSLNTTSSTELFDGAPSSEN) is disordered. The segment covering 19–28 (SSLNTTSSTE) has biased composition (polar residues). Positions 116–378 (KRLMSIVGNK…FETMGWKRPP (263 aa)) constitute an ABC transporter 1 domain. The next 6 membrane-spanning stretches (helical) occupy residues 487 to 507 (IPAL…IGSL), 524 to 544 (VLFL…TTLY), 569 to 589 (VIVD…IVYF), 598 to 618 (SHFF…ATIF), 631 to 651 (AMAL…FTVP), and 738 to 758 (GILV…TELI). The ABC transporter 2 domain occupies 813–1055 (FSWKGLSYDI…TVLEYLEDKG (243 aa)). 849–856 (GVSGAGKT) lines the ATP pocket. A run of 7 helical transmembrane segments spans residues 1149–1169 (YILA…FSFW), 1181–1201 (VLFS…QIMP), 1224–1244 (VFIL…GICT), 1264–1284 (LVLL…QLVV), 1287–1307 (VPSV…CLLF), 1322–1344 (IFMN…ALHG), and 1415–1435 (FGIF…LYYL).

Belongs to the ABC transporter superfamily. ABCG family. PDR (TC 3.A.1.205) subfamily.

The protein localises to the membrane. Functionally, ABC-type transporter; part of the gene cluster that mediates the biosynthesis of the meroterpenoid compound andrastin A, a promising antitumoral compound. Is required for the production of andrastin A but does not have a significant role in its secretion. The protein is ABC-type transporter adrC of Penicillium roqueforti.